Consider the following 563-residue polypeptide: Arginine--tRNA ligase (563 aa).

Positions 122–132 (PNIAKPMSMGH) match the 'HIGH' region motif.

The protein belongs to the class-I aminoacyl-tRNA synthetase family. Monomer.

The protein localises to the cytoplasm. The enzyme catalyses tRNA(Arg) + L-arginine + ATP = L-arginyl-tRNA(Arg) + AMP + diphosphate. This chain is Arginine--tRNA ligase, found in Ligilactobacillus salivarius (strain UCC118) (Lactobacillus salivarius).